The following is a 219-amino-acid chain: Holliday junction branch migration complex subunit RuvA (219 aa).

Positions 1–66 are domain I; the sequence is MIEYIIGKIS…NFLFEYYGFK (66 aa). The domain II stretch occupies residues 67–148; sequence TLREKIFFEN…SEYNNDVNHS (82 aa). The interval 149–154 is flexible linker; that stretch reads SINQQS. Residues 155-219 are domain III; the sequence is NSYNPVPDLV…EAVTNKTTVS (65 aa).

The protein belongs to the RuvA family. As to quaternary structure, homotetramer. Forms an RuvA(8)-RuvB(12)-Holliday junction (HJ) complex. HJ DNA is sandwiched between 2 RuvA tetramers; dsDNA enters through RuvA and exits via RuvB. An RuvB hexamer assembles on each DNA strand where it exits the tetramer. Each RuvB hexamer is contacted by two RuvA subunits (via domain III) on 2 adjacent RuvB subunits; this complex drives branch migration. In the full resolvosome a probable DNA-RuvA(4)-RuvB(12)-RuvC(2) complex forms which resolves the HJ.

The protein localises to the cytoplasm. Functionally, the RuvA-RuvB-RuvC complex processes Holliday junction (HJ) DNA during genetic recombination and DNA repair, while the RuvA-RuvB complex plays an important role in the rescue of blocked DNA replication forks via replication fork reversal (RFR). RuvA specifically binds to HJ cruciform DNA, conferring on it an open structure. The RuvB hexamer acts as an ATP-dependent pump, pulling dsDNA into and through the RuvAB complex. HJ branch migration allows RuvC to scan DNA until it finds its consensus sequence, where it cleaves and resolves the cruciform DNA. In Malacoplasma penetrans (strain HF-2) (Mycoplasma penetrans), this protein is Holliday junction branch migration complex subunit RuvA.